The primary structure comprises 353 residues: Protein RecA (353 aa).

Position 68 to 75 (68 to 75) interacts with ATP; the sequence is GPESSGKT.

It belongs to the RecA family.

The protein resides in the cytoplasm. Functionally, can catalyze the hydrolysis of ATP in the presence of single-stranded DNA, the ATP-dependent uptake of single-stranded DNA by duplex DNA, and the ATP-dependent hybridization of homologous single-stranded DNAs. It interacts with LexA causing its activation and leading to its autocatalytic cleavage. This is Protein RecA from Roseiflexus castenholzii (strain DSM 13941 / HLO8).